Here is a 1436-residue protein sequence, read N- to C-terminus: Inositol hexakisphosphate and diphosphoinositol-pentakisphosphate kinase 1 (1436 aa).

A substrate-binding site is contributed by 64 to 65 (KK). Residues Arg-145, Lys-198, His-205, Arg-224, 248–251 (EEFM), and 257–259 (DVK) contribute to the ATP site. 224 to 225 (RK) provides a ligand contact to substrate. Substrate is bound by residues Lys-259 and Arg-273. Residues Ser-275, Asp-320, and 332 to 334 (DVN) each bind ATP. 337–340 (SFVK) is a substrate binding site. The interval 382–453 (PTTSGTMMEL…VLDITRLLLA (72 aa)) is polyphosphoinositide-binding domain. The tract at residues 915–998 (GSAPAGCGFR…TSSSRPGGYR (84 aa)) is disordered. Phosphoserine is present on residues Ser-939, Ser-982, Ser-1032, Ser-1068, Ser-1140, and Ser-1147. Disordered stretches follow at residues 1131–1191 (NHQA…GFSD) and 1389–1436 (SELS…EAIS). Over residues 1163–1181 (SSGPSSTVSSAGPSSPTTV) the composition is skewed to low complexity. The segment covering 1405–1436 (LSEETELQAQEVSEEIDQESEVVDELPPEAIS) has biased composition (acidic residues).

Belongs to the histidine acid phosphatase family. VIP1 subfamily.

The protein localises to the cytoplasm. It localises to the cytosol. Its subcellular location is the cell membrane. The catalysed reaction is 1D-myo-inositol hexakisphosphate + ATP = 1-diphospho-1D-myo-inositol 2,3,4,5,6-pentakisphosphate + ADP. The enzyme catalyses 5-diphospho-1D-myo-inositol 1,2,3,4,6-pentakisphosphate + ATP + H(+) = 1,5-bis(diphospho)-1D-myo-inositol 2,3,4,6-tetrakisphosphate + ADP. Bifunctional inositol kinase that acts in concert with the IP6K kinases IP6K1, IP6K2 and IP6K3 to synthesize the diphosphate group-containing inositol pyrophosphates diphosphoinositol pentakisphosphate, PP-InsP5, and bis-diphosphoinositol tetrakisphosphate, (PP)2-InsP4. PP-InsP5 and (PP)2-InsP4, also respectively called InsP7 and InsP8, regulate a variety of cellular processes, including apoptosis, vesicle trafficking, cytoskeletal dynamics, exocytosis, insulin signaling and neutrophil activation. Phosphorylates inositol hexakisphosphate (InsP6) at position 1 to produce PP-InsP5 which is in turn phosphorylated by IP6Ks to produce (PP)2-InsP4. Alternatively, phosphorylates PP-InsP5 at position 1, produced by IP6Ks from InsP6, to produce (PP)2-InsP4. Activated when cells are exposed to hyperosmotic stress. The protein is Inositol hexakisphosphate and diphosphoinositol-pentakisphosphate kinase 1 of Mus musculus (Mouse).